The following is a 345-amino-acid chain: NADPH dehydrogenase (345 aa).

23–26 (SPMC) contributes to the FMN binding site. Substrate is bound at residue Y28. A60 and Q102 together coordinate FMN. 164 to 167 (HGAH) contacts substrate. Residues R215 and 307 to 308 (GR) each bind FMN.

This sequence belongs to the NADH:flavin oxidoreductase/NADH oxidase family. NamA subfamily. In terms of assembly, homotetramer. The cofactor is FMN.

The enzyme catalyses A + NADPH + H(+) = AH2 + NADP(+). Catalyzes the reduction of the double bond of an array of alpha,beta-unsaturated aldehydes and ketones. It also reduces the nitro group of nitroester and nitroaromatic compounds. It could have a role in detoxification processes. In Bacillus thuringiensis subsp. konkukian (strain 97-27), this protein is NADPH dehydrogenase.